The sequence spans 773 residues: Probable serine/threonine-protein kinase MARK-C (773 aa).

The span at 1–27 (MESNKSSSHGDVSTSPSFLNNHHQFNN) shows a compositional bias: polar residues. A disordered region spans residues 1–32 (MESNKSSSHGDVSTSPSFLNNHHQFNNGGDII). One can recognise a Protein kinase domain in the interval 46-300 (YEVGKTLGNG…IQELKNHPWT (255 aa)). Residues 52-60 (LGNGTFGKV) and Lys75 each bind ATP. Catalysis depends on Asp171, which acts as the Proton acceptor. Residues 362–390 (RYASKEVENLKSKLELLSKRKKSFSDKRN) are a coiled coil. 3 disordered regions span residues 382 to 445 (KKSF…SQGS), 462 to 487 (DNDIENSDNNKSSSLTRRSSDPNKDI), and 558 to 588 (YSIQQQQLQQQQQQQQEQHKEDNNKPNTNLR). The span at 405 to 443 (DLSSNNNNNQQQQNSPPSKTNSSSTSSSNRESNNNSPSQ) shows a compositional bias: low complexity. A coiled-coil region spans residues 445-474 (SIKEISLDELDNHIEQLDNDIENSDNNKSS). Positions 468–478 (SDNNKSSSLTR) are enriched in polar residues. Residues 561–573 (QQQQLQQQQQQQQ) show a composition bias toward low complexity. Residues 724–773 (CFDEDNSVKFQIEIVKICNLDLTGIQLKRLSGDTWKYKDICTELVESMKL) enclose the KA1 domain.

It belongs to the protein kinase superfamily. CAMK Ser/Thr protein kinase family. SNF1 subfamily.

The catalysed reaction is L-seryl-[protein] + ATP = O-phospho-L-seryl-[protein] + ADP + H(+). The enzyme catalyses L-threonyl-[protein] + ATP = O-phospho-L-threonyl-[protein] + ADP + H(+). The chain is Probable serine/threonine-protein kinase MARK-C (mrkC) from Dictyostelium discoideum (Social amoeba).